The chain runs to 297 residues: MRPELSQYKHLSAGKVREIYEIDDKHILMVASDRISAYDFILDTEIPDKGRVLTAMSQFFFDTIDFPNHLAGPADDPRIPEEVLGRAMVCKKLNMLPFECVVRGYLTGSGLVEYKQTSSVCGVELPEGLVESSQLPEPIFTPATKADIGDHDINVSFDVVEERLGEARANQLRDASIAIYKAAAEIARERGVILADTKFEFGIDEDGTLVLGDEVLTPDSSRYWPLEGYEAGSVQPSFDKQFVRNWLTGPKSGWDKDSGLEPPALPGSVVEATRERYIEAYELISGQKFCQWIGSCV.

Belongs to the SAICAR synthetase family.

It catalyses the reaction 5-amino-1-(5-phospho-D-ribosyl)imidazole-4-carboxylate + L-aspartate + ATP = (2S)-2-[5-amino-1-(5-phospho-beta-D-ribosyl)imidazole-4-carboxamido]succinate + ADP + phosphate + 2 H(+). Its pathway is purine metabolism; IMP biosynthesis via de novo pathway; 5-amino-1-(5-phospho-D-ribosyl)imidazole-4-carboxamide from 5-amino-1-(5-phospho-D-ribosyl)imidazole-4-carboxylate: step 1/2. This Corynebacterium glutamicum (strain R) protein is Phosphoribosylaminoimidazole-succinocarboxamide synthase.